An 831-amino-acid chain; its full sequence is Periplasmic nitrate reductase (831 aa).

A signal peptide (tat-type signal) is located at residues 1 to 31 (MKLSRRDFMKANAAVAAAAAAGLTIPTVAKA). Residues 40–96 (IKWDKAPCRFCGTGCGVLVGTQNGRIVASQGDPDSPVNRGLNCVKGYFLPKIMYGKD) enclose the 4Fe-4S Mo/W bis-MGD-type domain. Residues cysteine 47, cysteine 50, cysteine 54, and cysteine 82 each contribute to the [4Fe-4S] cluster site. Mo-bis(molybdopterin guanine dinucleotide) contacts are provided by residues lysine 84, glutamine 151, asparagine 176, cysteine 180, 213 to 220 (WGSNMAEM), 244 to 248 (STFEH), 263 to 265 (QTD), methionine 373, glutamine 377, asparagine 483, 509 to 510 (SD), lysine 532, aspartate 559, and 719 to 728 (TGRVLEHWHT). Residue phenylalanine 795 coordinates substrate. Positions 803 and 820 each coordinate Mo-bis(molybdopterin guanine dinucleotide).

It belongs to the prokaryotic molybdopterin-containing oxidoreductase family. NasA/NapA/NarB subfamily. In terms of assembly, component of the periplasmic nitrate reductase NapAB complex composed of NapA and NapB. The cofactor is [4Fe-4S] cluster. Requires Mo-bis(molybdopterin guanine dinucleotide) as cofactor. In terms of processing, predicted to be exported by the Tat system. The position of the signal peptide cleavage has not been experimentally proven.

The protein localises to the periplasm. It catalyses the reaction 2 Fe(II)-[cytochrome] + nitrate + 2 H(+) = 2 Fe(III)-[cytochrome] + nitrite + H2O. In terms of biological role, catalytic subunit of the periplasmic nitrate reductase complex NapAB. Receives electrons from NapB and catalyzes the reduction of nitrate to nitrite. The chain is Periplasmic nitrate reductase from Yersinia enterocolitica serotype O:8 / biotype 1B (strain NCTC 13174 / 8081).